The sequence spans 2531 residues: Talin (2531 aa).

Residues 87-401 enclose the FERM domain; sequence RPLRVRMMDE…GYIDIILKKK (315 aa). Residues 598–621 are interaction with VIN1; the sequence is GEKLLEAARGLAGAVRHLLKSAEP. The region spanning 2287-2526 is the I/LWEQ domain; the sequence is TDWVDPSDPN…KIRHDKYKRH (240 aa). The interval 2466–2485 is disordered; it reads AAKRSSEEGDDEEVSGGGQE.

As to quaternary structure, interacts with VIN1 (vinculin); the interaction facilitates VIN1 binding to F-actin.

It is found in the cytoplasm. The protein resides in the cytoskeleton. The protein localises to the cell cortex. Its function is as follows. Probably involved in connections of major cytoskeletal structures to the plasma membrane. This is Talin from Oscarella pearsei (Sponge).